A 364-amino-acid polypeptide reads, in one-letter code: Fructose-1,6-bisphosphatase class 1 2 (364 aa).

Mg(2+)-binding residues include E101, D123, L125, and D126. Residues 126–129 and N218 contribute to the substrate site; that span reads DGSS. Position 290 (E290) interacts with Mg(2+).

This sequence belongs to the FBPase class 1 family. Homotetramer. Requires Mg(2+) as cofactor.

The protein resides in the cytoplasm. The catalysed reaction is beta-D-fructose 1,6-bisphosphate + H2O = beta-D-fructose 6-phosphate + phosphate. It functions in the pathway carbohydrate biosynthesis; gluconeogenesis. The sequence is that of Fructose-1,6-bisphosphatase class 1 2 from Cupriavidus taiwanensis (strain DSM 17343 / BCRC 17206 / CCUG 44338 / CIP 107171 / LMG 19424 / R1) (Ralstonia taiwanensis (strain LMG 19424)).